The primary structure comprises 102 residues: Small ribosomal subunit protein uS10 (102 aa).

The protein belongs to the universal ribosomal protein uS10 family. As to quaternary structure, part of the 30S ribosomal subunit.

In terms of biological role, involved in the binding of tRNA to the ribosomes. The protein is Small ribosomal subunit protein uS10 of Citrifermentans bemidjiense (strain ATCC BAA-1014 / DSM 16622 / JCM 12645 / Bem) (Geobacter bemidjiensis).